Reading from the N-terminus, the 508-residue chain is UTP--glucose-1-phosphate uridylyltransferase (508 aa).

Serine 13 carries the phosphoserine modification. UTP is bound by residues 113–116 (LNGG), lysine 127, glutamine 190, and glycine 222. 115 to 116 (GG) lines the substrate pocket. Lysine 127 contributes to the Mg(2+) binding site. Substrate-binding positions include histidine 223 and 251 to 253 (NID). Aspartate 253 and lysine 396 together coordinate UTP. Residue aspartate 253 participates in Mg(2+) binding. Lysine 396 is an active-site residue. A Phosphothreonine modification is found at threonine 426. Serine 434 carries the post-translational modification Phosphoserine. The residue at position 438 (lysine 438) is an N6-acetyllysine. Phosphoserine occurs at positions 448 and 461. The interval 457-508 (HLTVSGDVTFGKNVSLKGTVIIIANHGDRIDIPPGAVLENKIVSGNLRILDH) is oligomerization. Positions 502–503 (NL) are critical for end-to-end subunit interaction.

Belongs to the UDPGP type 1 family. Homooctamer.

The protein localises to the cytoplasm. It catalyses the reaction alpha-D-glucose 1-phosphate + UTP + H(+) = UDP-alpha-D-glucose + diphosphate. It participates in glycan biosynthesis; glycogen biosynthesis. UTP--glucose-1-phosphate uridylyltransferase catalyzing the conversion of glucose-1-phosphate into UDP-glucose, a crucial precursor for the production of glycogen. The chain is UTP--glucose-1-phosphate uridylyltransferase (Ugp2) from Mus musculus (Mouse).